Reading from the N-terminus, the 648-residue chain is Centrosomal protein of 63 kDa-B (648 aa).

2 coiled-coil regions span residues 19–188 (DSCE…QSHN) and 222–555 (EEEL…DAAS). A Phosphoserine; by atm and atr modification is found at S559. Residues 611–644 (FLQEEEQRSHELLQRLNAHIEELKQESQRTVEHF) adopt a coiled-coil conformation.

It belongs to the CEP63 family. In terms of processing, phosphorylation at Ser-559 by atm and atr promotes its delocalization from the centrosome and impairs its ability to promote centrosome dependent spindle assembly.

It is found in the cytoplasm. It localises to the cytoskeleton. The protein resides in the microtubule organizing center. Its subcellular location is the centrosome. The protein localises to the centriole. Its function is as follows. Required for normal spindle assembly. Plays a key role in mother-centriole-dependent centriole duplication. Plays a role in DNA damage response. Following DNA damage, such as double-strand breaks (DSBs), is removed from centrosomes; this leads to the inactivation of spindle assembly and delay in mitotic progression. The protein is Centrosomal protein of 63 kDa-B (cep63-b) of Xenopus laevis (African clawed frog).